The following is a 320-amino-acid chain: ATP-dependent 6-phosphofructokinase (320 aa).

Gly12 is an ATP binding site. ADP is bound at residue 22–26 (RAVVR). Residues 73–74 (RF) and 103–106 (GDGS) each bind ATP. Residue Asp104 participates in Mg(2+) binding. 126-128 (TID) serves as a coordination point for substrate. Asp128 acts as the Proton acceptor in catalysis. Position 155 (Arg155) interacts with ADP. Residues Arg163 and 170 to 172 (MGR) contribute to the substrate site. Residues 186–188 (GAE) and 214–216 (KNH) each bind ADP. Substrate is bound by residues Glu223, Arg244, and 250-253 (HIQR).

It belongs to the phosphofructokinase type A (PFKA) family. ATP-dependent PFK group I subfamily. Prokaryotic clade 'B1' sub-subfamily. In terms of assembly, homotetramer. The cofactor is Mg(2+).

Its subcellular location is the cytoplasm. It carries out the reaction beta-D-fructose 6-phosphate + ATP = beta-D-fructose 1,6-bisphosphate + ADP + H(+). Its pathway is carbohydrate degradation; glycolysis; D-glyceraldehyde 3-phosphate and glycerone phosphate from D-glucose: step 3/4. Its activity is regulated as follows. Allosterically activated by ADP and other diphosphonucleosides, and allosterically inhibited by phosphoenolpyruvate. Its function is as follows. Catalyzes the phosphorylation of D-fructose 6-phosphate to fructose 1,6-bisphosphate by ATP, the first committing step of glycolysis. The sequence is that of ATP-dependent 6-phosphofructokinase from Teredinibacter turnerae (strain ATCC 39867 / T7901).